Here is a 904-residue protein sequence, read N- to C-terminus: MAESSESLSASSPARQRRRISDPLTSSPGRSSRRADALTSSPGRDLPPFEDESEGLLGTEGPMEEEEDGEELIGDGMERDYRPIPELDVYEAEGLALDDEDVEELTASQREAAERTMRQRDREAGRGLGRMRRGLLYDSSEEDEERPARKRRHVERATEDGEEDEEMIESIENLEDLKGHSVREWVSMAGPRLEIHHRFKNFLRTHVDSHGHNVFKERISDMCKENRESLVVNYEDLAAREHVLAYFLPEAPAELLQIFDEAALEVVLAMYPKYDRITNHIHVRISHLPLVEELRSLRQLHLNQLIRTSGVVTSCTGVLPQLSMVKYNCSKCNFVLGPFCQSQNQEVKPGSCPECQSAGPFEINMEETIYQNYQRIRIQESPGKVAAGRLPRSKDAILLADLVDSCKPGDEIELTGIYHNNYDGSLNTANGFPVFATIILANHVAKKDNKVAVGELTDEDVKMITGLSKDQQIGEKIFASIAPSIYGHEDIKRGLALALFGGEPKNPGGKHKVRGDINVLLCGDPGTAKSQFLKYIEKVSSRAIFTTGQGASAVGLTAYVQRHPVSREWTLEAGALVLADRGVCLIDEFDKMNDQDRTSIHEAMEQQSISISKAGIVTSLQARCTVIAAANPIGGRYDPSLTFSENVDLTEPIISRFDVLCVVRDTVDPVQDEMLARFVVGSHVRHHPSNKKDEGLTNGGTLEPAMPNTYGVEPLPQEVLKKYIIYAKERVRPKLNQMDQDKVARMYSDLRKESMATGSIPITVRHIESMIRMAEAHARMHLRDYVMEDDVNMAIRVMMESFIDTQKFSVMRSMRKTFARYLSFRRDNNDLLLFILKQLVAEQVTYQRNRFGAQQDTIEIPEKDLMDKARQINIHNLSAFYDSDLFKFNKFSRDLKRKLILQQF.

The segment covering Met1–Ser12 has biased composition (low complexity). The tract at residues Met1–Glu166 is disordered. N-acetylalanine is present on Ala2. Residues Ala2–Gln257 form an interaction with KAT7 region. Ser12 and Ser21 each carry phosphoserine. Thr25 carries the phosphothreonine modification. 3 positions are modified to phosphoserine: Ser26, Ser27, and Ser32. The residue at position 39 (Thr39) is a Phosphothreonine. Ser40 is subject to Phosphoserine; by CDC7. Ser41 is modified (phosphoserine). Position 53 is a phosphoserine; by CDC7 (Ser53). The residue at position 59 (Thr59) is a Phosphothreonine. Residues Gly61–Arg130 form an interaction with DNJC9 region. Acidic residues predominate over residues Pro62 to Ile73. Residues Gly76–Pro85 are compositionally biased toward basic and acidic residues. Acidic residues predominate over residues Asp88–Glu104. Ser108 is modified (phosphoserine). The span at Glu111 to Gly125 shows a compositional bias: basic and acidic residues. At Tyr137 the chain carries Phosphotyrosine. A phosphoserine mark is found at Ser139 and Ser140. A Glycyl lysine isopeptide (Lys-Gly) (interchain with G-Cter in SUMO2) cross-link involves residue Lys178. An N6-acetyllysine modification is found at Lys216. A C4-type zinc finger spans residues Cys329 to Cys355. Residues Ser381 and Ser484 each carry the phosphoserine modification. The region spanning Ile473–Val680 is the MCM domain. 2 residues coordinate ADP: Ser530 and Gln531. The short motif at Ser655–Asp658 is the Arginine finger element.

It belongs to the MCM family. As to quaternary structure, component of the MCM2-7 complex. The complex forms a toroidal hexameric ring with the proposed subunit order MCM2-MCM6-MCM4-MCM7-MCM3-MCM5. Component of the CMG helicase complex, a hexameric ring of related MCM2-7 subunits stabilized by CDC45 and the tetrameric GINS complex. Interacts with DBF4. Interacts with KAT7. May interact with MCM10. Component of the replisome complex composed of at least DONSON, MCM2, MCM7, PCNA and TICRR. Forms a co-chaperone complex with DNAJC9 and histone H3.3-H4 heterodimers. Within the complex, interacts (via N-terminus) with DNAJC9 (via C-terminus); the interaction is histone-dependent. Interacts with AGER/RAGE; the interaction is increased following DNA replication stress and stabilizes the MCM2-7 complex at replication forks. Post-translationally, phosphorylated on Ser-108 by ATR in proliferating cells. Ser-108 proliferation is increased by genotoxic agents. Ser-40 is mediated by the CDC7-DBF4 and CDC7-DBF4B complexes, while Ser-53 phosphorylation is only mediated by the CDC7-DBF4 complex. Phosphorylation by the CDC7-DBF4 complex during G1/S phase is required for the initiation of DNA replication. In terms of processing, acetylated by MCM3AP. O-glycosylated (O-GlcNAcylated), in a cell cycle-dependent manner.

The protein localises to the nucleus. The protein resides in the chromosome. The catalysed reaction is ATP + H2O = ADP + phosphate + H(+). In terms of biological role, acts as a component of the MCM2-7 complex (MCM complex) which is the replicative helicase essential for 'once per cell cycle' DNA replication initiation and elongation in eukaryotic cells. Core component of CDC45-MCM-GINS (CMG) helicase, the molecular machine that unwinds template DNA during replication, and around which the replisome is built. The active ATPase sites in the MCM2-7 ring are formed through the interaction surfaces of two neighboring subunits such that a critical structure of a conserved arginine finger motif is provided in trans relative to the ATP-binding site of the Walker A box of the adjacent subunit. The six ATPase active sites, however, are likely to contribute differentially to the complex helicase activity. Required for the entry in S phase and for cell division. Plays a role in terminally differentiated hair cells development of the cochlea and induces cells apoptosis. In Mus musculus (Mouse), this protein is DNA replication licensing factor MCM2 (Mcm2).